Reading from the N-terminus, the 270-residue chain is Bifunctional folate synthesis protein (270 aa).

Positions 1 to 119 are DHNA; it reads MDQLQIKDLE…TCSVTIHRRK (119 aa). Residues glutamate 21, tyrosine 53, and 72-73 contribute to the substrate site; that span reads IE. Residue lysine 99 is the Proton donor/acceptor; for DHNA activity of the active site. Residues 120–270 form an HPPK region; sequence QRAFIALGSN…IRNLYDALKK (151 aa). Residues 160–163, 171–173, 192–195, 200–215, 227–233, and 238–240 each bind ATP; these read TEPW, FAN, LAIE, RVREVHWGPRLIDLDL, DLILPHP, and RLF. Positions 212 and 214 each coordinate Mg(2+).

The protein in the N-terminal section; belongs to the DHNA family. It in the C-terminal section; belongs to the HPPK family. As to quaternary structure, homotrimer or homotetramer.

The enzyme catalyses 7,8-dihydroneopterin = 6-hydroxymethyl-7,8-dihydropterin + glycolaldehyde. It carries out the reaction 6-hydroxymethyl-7,8-dihydropterin + ATP = (7,8-dihydropterin-6-yl)methyl diphosphate + AMP + H(+). It participates in cofactor biosynthesis; tetrahydrofolate biosynthesis; 2-amino-4-hydroxy-6-hydroxymethyl-7,8-dihydropteridine diphosphate from 7,8-dihydroneopterin triphosphate: step 3/4. It functions in the pathway cofactor biosynthesis; tetrahydrofolate biosynthesis; 2-amino-4-hydroxy-6-hydroxymethyl-7,8-dihydropteridine diphosphate from 7,8-dihydroneopterin triphosphate: step 4/4. Catalyzes two sequential steps of tetrahydrofolate biosynthesis, the conversion of 7,8-dihydroneopterin to 6-hydroxymethyl-7,8-dihydropterin diphosphate. This is Bifunctional folate synthesis protein from Streptococcus pneumoniae serotype 4 (strain ATCC BAA-334 / TIGR4).